We begin with the raw amino-acid sequence, 102 residues long: Small ribosomal subunit protein uS10 (102 aa).

It belongs to the universal ribosomal protein uS10 family. Part of the 30S ribosomal subunit.

In terms of biological role, involved in the binding of tRNA to the ribosomes. The sequence is that of Small ribosomal subunit protein uS10 from Clostridium kluyveri (strain NBRC 12016).